A 249-amino-acid polypeptide reads, in one-letter code: Uridylate kinase (249 aa).

21 to 24 (KLSG) serves as a coordination point for ATP. Gly63 serves as a coordination point for UMP. The ATP site is built by Gly64 and Arg68. UMP contacts are provided by residues Asp84 and 145–152 (TGNPFVTT). ATP contacts are provided by Thr172, Tyr178, and Asp181.

Belongs to the UMP kinase family. Homohexamer.

It is found in the cytoplasm. The catalysed reaction is UMP + ATP = UDP + ADP. Its pathway is pyrimidine metabolism; CTP biosynthesis via de novo pathway; UDP from UMP (UMPK route): step 1/1. Its activity is regulated as follows. Inhibited by UTP. In terms of biological role, catalyzes the reversible phosphorylation of UMP to UDP. In Francisella tularensis subsp. tularensis (strain FSC 198), this protein is Uridylate kinase.